Consider the following 390-residue polypeptide: Guanidine hydrolase (390 aa).

Ni(2+) contacts are provided by H174, D199, H201, D203, D291, and D293.

It belongs to the arginase family. Homohexamer. Ni(2+) is required as a cofactor.

The protein localises to the cytoplasm. The enzyme catalyses guanidine + H2O = urea + NH4(+). Its activity is regulated as follows. Activation of GdmH depends on the presence of the accessory proteins GhaA (Sll1078) and GhaB (Sll1079), which load nickel into the active site. Hydrolase activity is slightly activated in the presence of GTP. It does not require ATP or NAD(P)H. Addition of Ca(2+), Mn(2+), Fe(2+) or Fe(3+) has no consistent effects, whereas addition of Co(2+), Cu(2+) or Zn(2+) inhibits the activity. In terms of biological role, catalyzes the hydrolysis of guanidine into urea and ammonium. Is highly specific for free guanidine. At pH 8, also catalyzes the release of urea from methylguanidine but with significantly reduced specific activity compared with that for guanidine. Cannot hydrolyze guanidinoacetate, guanidinopropionate, guanidinobutyrate, agmatine, arginine or creatine. Required to use guanidine as the sole nitrogen source for growth. Overexpression of the gene accelerates guanidine degradation and promotes biomass growth. This is Guanidine hydrolase from Synechocystis sp. (strain ATCC 27184 / PCC 6803 / Kazusa).